The following is a 445-amino-acid chain: Meiosis-specific serine/threonine-protein kinase mek1 (445 aa).

Residues 62 to 116 (VSVGRSNTCNYQLLQFTASYKHFRVYSVLIDDDMDPLVYCEDQSSNGTFLNHRLI) form the FHA domain. Residues 160 to 421 (NITQRLLGIG…VKQCLSHPWF (262 aa)) enclose the Protein kinase domain. Residues 166-174 (LGIGGFSRI) and lysine 189 contribute to the ATP site. Catalysis depends on aspartate 281, which acts as the Proton acceptor.

This sequence belongs to the protein kinase superfamily. CAMK Ser/Thr protein kinase family. CHEK2 subfamily.

The enzyme catalyses L-seryl-[protein] + ATP = O-phospho-L-seryl-[protein] + ADP + H(+). The catalysed reaction is L-threonyl-[protein] + ATP = O-phospho-L-threonyl-[protein] + ADP + H(+). In terms of biological role, probable protein kinase required for meiotic recombination. This is Meiosis-specific serine/threonine-protein kinase mek1 (mek1) from Schizosaccharomyces pombe (strain 972 / ATCC 24843) (Fission yeast).